Here is a 346-residue protein sequence, read N- to C-terminus: Annexin A1 (346 aa).

Position 2 is an N-acetylalanine (alanine 2). Serine 5 carries the phosphoserine; by TRPM7 modification. An Isoglutamyl lysine isopeptide (Gln-Lys) (interchain with K-?) cross-link involves residue glutamine 19. Tyrosine 21 is modified (phosphotyrosine; by EGFR). Serine 27 carries the phosphoserine; by PKC modification. A phosphoserine mark is found at serine 34 and serine 37. Residue threonine 41 is modified to Phosphothreonine. Annexin repeat units lie at residues phenylalanine 42–lysine 113, threonine 114–lysine 185, aspartate 197–lysine 269, and serine 273–glycine 344. Lysine 58 bears the N6-acetyllysine mark. Ca(2+) contacts are provided by glycine 59, valine 60, glutamate 62, lysine 97, leucine 100, glutamate 105, methionine 127, glycine 129, glycine 131, threonine 132, and glutamate 134. A Phosphothreonine modification is found at threonine 136. 3 residues coordinate Ca(2+): aspartate 171, glycine 210, and arginine 213. Lysine 214 participates in a covalent cross-link: Glycyl lysine isopeptide (Lys-Gly) (interchain with G-Cter in SUMO1); alternate. Residue lysine 214 forms a Glycyl lysine isopeptide (Lys-Gly) (interchain with G-Cter in SUMO2); alternate linkage. Residue glycine 215 participates in Ca(2+) binding. Residue lysine 239 is modified to N6-acetyllysine. Ca(2+)-binding residues include aspartate 253, glutamate 255, and leucine 256. Lysine 257 participates in a covalent cross-link: Glycyl lysine isopeptide (Lys-Gly) (interchain with G-Cter in SUMO1). Positions 261, 286, 288, and 290 each coordinate Ca(2+). N6-acetyllysine is present on lysine 312. Cysteine 324 and cysteine 343 are oxidised to a cystine. Leucine 328, glutamate 330, and threonine 331 together coordinate Ca(2+). A Glycyl lysine isopeptide (Lys-Gly) (interchain with G-Cter in SUMO1) cross-link involves residue lysine 332. Glutamate 336 lines the Ca(2+) pocket.

Belongs to the annexin family. As to quaternary structure, homodimer; non-covalently linked. Homodimer; linked by transglutamylation. Homodimers linked by transglutamylation are observed in placenta, but not in other tissues. Interacts with S100A11. Heterotetramer, formed by two molecules each of S100A11 and ANXA1. Interacts with DYSF. Interacts with EGFR. In terms of processing, phosphorylated by protein kinase C, EGFR and TRPM7. Phosphorylated in response to EGF treatment. Post-translationally, sumoylated. Proteolytically cleaved by cathepsin CTSG to release the active N-terminal peptide Ac2-26.

The protein resides in the nucleus. It localises to the cytoplasm. It is found in the cell projection. The protein localises to the cilium. Its subcellular location is the basolateral cell membrane. The protein resides in the lateral cell membrane. It localises to the cell membrane. It is found in the apical cell membrane. The protein localises to the membrane. Its subcellular location is the early endosome. The protein resides in the cytoplasmic vesicle membrane. It localises to the endosome membrane. It is found in the secreted. The protein localises to the extracellular space. Its subcellular location is the extracellular exosome. The protein resides in the cytoplasmic vesicle. It localises to the secretory vesicle lumen. It is found in the phagocytic cup. Plays important roles in the innate immune response as effector of glucocorticoid-mediated responses and regulator of the inflammatory process. Has anti-inflammatory activity. Plays a role in glucocorticoid-mediated down-regulation of the early phase of the inflammatory response. Contributes to the adaptive immune response by enhancing signaling cascades that are triggered by T-cell activation, regulates differentiation and proliferation of activated T-cells. Promotes the differentiation of T-cells into Th1 cells and negatively regulates differentiation into Th2 cells. Has no effect on unstimulated T-cells. Negatively regulates hormone exocytosis via activation of the formyl peptide receptors and reorganization of the actin cytoskeleton. Has high affinity for Ca(2+) and can bind up to eight Ca(2+) ions. Displays Ca(2+)-dependent binding to phospholipid membranes. Plays a role in the formation of phagocytic cups and phagosomes. Plays a role in phagocytosis by mediating the Ca(2+)-dependent interaction between phagosomes and the actin cytoskeleton. Functionally, functions at least in part by activating the formyl peptide receptors and downstream signaling cascades. Promotes chemotaxis of granulocytes and monocytes via activation of the formyl peptide receptors. Promotes rearrangement of the actin cytoskeleton, cell polarization and cell migration. Promotes resolution of inflammation and wound healing. Acts via neutrophil N-formyl peptide receptors to enhance the release of CXCL2. In Pan troglodytes (Chimpanzee), this protein is Annexin A1 (ANXA1).